A 436-amino-acid chain; its full sequence is Phosphoribosylamine--glycine ligase (436 aa).

The ATP-grasp domain occupies 106–318 (RKLFEDYDIE…LADVCQAIVD (213 aa)). An ATP-binding site is contributed by 133–196 (LDDFDRDVVV…EERLIGEEFT (64 aa)). The Mg(2+) site is built by Gln276, Glu288, and Asn290. Mn(2+) contacts are provided by Gln276, Glu288, and Asn290.

The protein belongs to the GARS family. The cofactor is Mg(2+). Mn(2+) serves as cofactor.

The catalysed reaction is 5-phospho-beta-D-ribosylamine + glycine + ATP = N(1)-(5-phospho-beta-D-ribosyl)glycinamide + ADP + phosphate + H(+). Its pathway is purine metabolism; IMP biosynthesis via de novo pathway; N(1)-(5-phospho-D-ribosyl)glycinamide from 5-phospho-alpha-D-ribose 1-diphosphate: step 2/2. This is Phosphoribosylamine--glycine ligase from Methanobrevibacter smithii (strain ATCC 35061 / DSM 861 / OCM 144 / PS).